The primary structure comprises 424 residues: 3-oxo-tetronate kinase (424 aa).

ATP is bound by residues serine 264, 363–366, and glycine 408; that span reads GGET.

The protein belongs to the four-carbon acid sugar kinase family.

It catalyses the reaction 3-dehydro-L-erythronate + ATP = 3-dehydro-4-O-phospho-L-erythronate + ADP + H(+). The enzyme catalyses 3-dehydro-D-erythronate + ATP = 3-dehydro-4-O-phospho-D-erythronate + ADP + H(+). In terms of biological role, catalyzes the ATP-dependent phosphorylation of 3-oxo-tetronate to 3-oxo-tetronate 4-phosphate. The sequence is that of 3-oxo-tetronate kinase from Methylobacterium radiotolerans (strain ATCC 27329 / DSM 1819 / JCM 2831 / NBRC 15690 / NCIMB 10815 / 0-1).